The chain runs to 440 residues: NK1 transcription factor-related protein 1 (440 aa).

The span at 1-13 (MSTSGPAAPGDVP) shows a compositional bias: low complexity. Disordered regions lie at residues 1 to 82 (MSTS…RPTS), 145 to 291 (GVAA…PRRA), and 342 to 387 (KWKK…PMGA). The span at 14–31 (ALPPPPPGPGSGPAPPAP) shows a compositional bias: pro residues. Composition is skewed to low complexity over residues 62-74 (VPAV…AARP) and 145-158 (GVAA…TSAG). Polar residues predominate over residues 170–181 (GYSSGSGRSPTA). Over residues 182–198 (DSEDEAPEDEDEEEAPE) the composition is skewed to acidic residues. Residues 210–222 (GGSGGLGARGSGC) are compositionally biased toward gly residues. Residues 237–269 (AAPGPRGNSPGAPGPPATATGAGSAGSTPQGAA) are compositionally biased toward low complexity. A DNA-binding region (homeobox) is located at residues 288–347 (PRRARTAFTYEQLVALENKFKATRYLSVCERLNLALSLSLTETQVKIWFQNRRTKWKKQN). Residues 356–374 (TGGGGGPGPGAGPGAGLPG) show a composition bias toward gly residues.

The protein belongs to the NK-1 homeobox family.

The protein localises to the nucleus. Functionally, may be required for the coordinated crosstalk of factors involved in the maintenance of energy homeostasis, possibly by regulating the transcription of specific factors involved in energy balance. This Mus musculus (Mouse) protein is NK1 transcription factor-related protein 1.